Consider the following 3169-residue polypeptide: FRAS1-related extracellular matrix protein 2 (3169 aa).

Residues M1–P24 form a disordered region. The N-terminal stretch at M1–A46 is a signal peptide. Polar residues predominate over residues G8–Q21. The Extracellular portion of the chain corresponds to Q47 to T3113. CSPG repeat units follow at residues K319–E413, A438–V537, P560–Q675, P700–E807, Q828–S919, H945–S1037, A1066–S1168, E1189–T1282, T1303–T1399, V1420–T1512, K1532–T1621, and V1655–E1752. N-linked (GlcNAc...) asparagine glycosylation is present at N358. N-linked (GlcNAc...) asparagine glycosylation is found at N1244 and N1369. N-linked (GlcNAc...) asparagine glycans are attached at residues N1584 and N1741. Calx-beta domains are found at residues L1759–S1858, A1871–S1982, Q1997–R2103, V2118–G2220, and T2238–K2342. The segment at S3036–S3057 is disordered. Over residues L3037–T3047 the composition is skewed to polar residues. A helical membrane pass occupies residues V3114–M3134. Residues C3135–V3169 are Cytoplasmic-facing. A disordered region spans residues F3141–V3169.

The protein belongs to the FRAS1 family. Interacts with FREM1.

The protein resides in the cell membrane. In terms of biological role, extracellular matrix protein required for maintenance of the integrity of the skin epithelium and for maintenance of renal epithelia. Required for epidermal adhesion. Involved in the development of eyelids and the anterior segment of the eyeballs. This Homo sapiens (Human) protein is FRAS1-related extracellular matrix protein 2 (FREM2).